Consider the following 436-residue polypeptide: ATP-dependent protease ATPase subunit HslU (436 aa).

Residues I19, 61-66 (GVGKTE), D249, E314, and R386 contribute to the ATP site.

Belongs to the ClpX chaperone family. HslU subfamily. A double ring-shaped homohexamer of HslV is capped on each side by a ring-shaped HslU homohexamer. The assembly of the HslU/HslV complex is dependent on binding of ATP.

The protein localises to the cytoplasm. Its function is as follows. ATPase subunit of a proteasome-like degradation complex; this subunit has chaperone activity. The binding of ATP and its subsequent hydrolysis by HslU are essential for unfolding of protein substrates subsequently hydrolyzed by HslV. HslU recognizes the N-terminal part of its protein substrates and unfolds these before they are guided to HslV for hydrolysis. In Bartonella bacilliformis (strain ATCC 35685 / KC583 / Herrer 020/F12,63), this protein is ATP-dependent protease ATPase subunit HslU.